The sequence spans 400 residues: Lysophospholipid transporter LplT (400 aa).

12 helical membrane passes run Val19–Ala39, Val53–Ala73, Ala91–Ile111, Leu139–Ala159, Ile164–Ile184, Ser195–Trp213, Leu227–Leu247, Tyr257–Val277, Thr281–Leu301, Ala304–Val324, Asn352–Ala372, and Val373–Trp393.

Belongs to the major facilitator superfamily. LplT (TC 2.A.1.42) family.

Its subcellular location is the cell inner membrane. In terms of biological role, catalyzes the facilitated diffusion of 2-acyl-glycero-3-phosphoethanolamine (2-acyl-GPE) into the cell. In Salmonella enteritidis PT4 (strain P125109), this protein is Lysophospholipid transporter LplT.